A 155-amino-acid polypeptide reads, in one-letter code: Small ribosomal subunit protein uS7c (155 aa).

Belongs to the universal ribosomal protein uS7 family. As to quaternary structure, part of the 30S ribosomal subunit.

Its subcellular location is the plastid. The protein localises to the chloroplast. One of the primary rRNA binding proteins, it binds directly to 16S rRNA where it nucleates assembly of the head domain of the 30S subunit. This chain is Small ribosomal subunit protein uS7c (rps7), found in Physcomitrium patens (Spreading-leaved earth moss).